Here is a 331-residue protein sequence, read N- to C-terminus: Glucokinase (331 aa).

16–21 (GDIGGT) is a binding site for ATP.

Belongs to the bacterial glucokinase family.

Its subcellular location is the cytoplasm. The catalysed reaction is D-glucose + ATP = D-glucose 6-phosphate + ADP + H(+). The chain is Glucokinase from Pseudomonas aeruginosa (strain LESB58).